Reading from the N-terminus, the 163-residue chain is UPF0260 protein GOX1406 (163 aa).

This sequence belongs to the UPF0260 family.

The sequence is that of UPF0260 protein GOX1406 from Gluconobacter oxydans (strain 621H) (Gluconobacter suboxydans).